Here is a 128-residue protein sequence, read N- to C-terminus: Fluoride-specific ion channel FluC (128 aa).

4 consecutive transmembrane segments (helical) span residues Ala-5–Ile-25, Thr-32–Ala-52, Phe-70–Leu-90, and Val-106–Ile-126. The Na(+) site is built by Gly-77 and Thr-80.

Belongs to the fluoride channel Fluc/FEX (TC 1.A.43) family.

The protein localises to the cell inner membrane. It catalyses the reaction fluoride(in) = fluoride(out). With respect to regulation, na(+) is not transported, but it plays an essential structural role and its presence is essential for fluoride channel function. Its function is as follows. Fluoride-specific ion channel. Important for reducing fluoride concentration in the cell, thus reducing its toxicity. The chain is Fluoride-specific ion channel FluC from Paramagnetospirillum magneticum (strain ATCC 700264 / AMB-1) (Magnetospirillum magneticum).